Consider the following 141-residue polypeptide: Large ribosomal subunit protein uL11 (141 aa).

Belongs to the universal ribosomal protein uL11 family. As to quaternary structure, part of the ribosomal stalk of the 50S ribosomal subunit. Interacts with L10 and the large rRNA to form the base of the stalk. L10 forms an elongated spine to which L12 dimers bind in a sequential fashion forming a multimeric L10(L12)X complex. One or more lysine residues are methylated.

Forms part of the ribosomal stalk which helps the ribosome interact with GTP-bound translation factors. The polypeptide is Large ribosomal subunit protein uL11 (Acaryochloris marina (strain MBIC 11017)).